The chain runs to 509 residues: ATP synthase subunit alpha, mitochondrial (509 aa).

Gly-171 to Thr-178 lines the ATP pocket.

This sequence belongs to the ATPase alpha/beta chains family. F-type ATPases have 2 components, CF(1) - the catalytic core - and CF(0) - the membrane proton channel. CF(1) has five subunits: alpha(3), beta(3), gamma(1), delta(1), epsilon(1). CF(0) has three main subunits: a, b and c.

It is found in the mitochondrion. The protein localises to the mitochondrion inner membrane. Functionally, mitochondrial membrane ATP synthase (F(1)F(0) ATP synthase or Complex V) produces ATP from ADP in the presence of a proton gradient across the membrane which is generated by electron transport complexes of the respiratory chain. F-type ATPases consist of two structural domains, F(1) - containing the extramembraneous catalytic core, and F(0) - containing the membrane proton channel, linked together by a central stalk and a peripheral stalk. During catalysis, ATP synthesis in the catalytic domain of F(1) is coupled via a rotary mechanism of the central stalk subunits to proton translocation. Subunits alpha and beta form the catalytic core in F(1). Rotation of the central stalk against the surrounding alpha(3)beta(3) subunits leads to hydrolysis of ATP in three separate catalytic sites on the beta subunits. Subunit alpha does not bear the catalytic high-affinity ATP-binding sites. The chain is ATP synthase subunit alpha, mitochondrial (ATPA) from Oryza sativa subsp. indica (Rice).